The sequence spans 287 residues: Large ribosomal subunit protein uL2 (287 aa).

A disordered region spans residues 221-287; it reads RGSVMNPCDH…SKRSRGGRDS (67 aa). Residues 258–287 are compositionally biased toward basic residues; that stretch reads KTRKRNKPSNKFVLRKRRKTSKRSRGGRDS.

This sequence belongs to the universal ribosomal protein uL2 family. Part of the 50S ribosomal subunit. Forms a bridge to the 30S subunit in the 70S ribosome.

In terms of biological role, one of the primary rRNA binding proteins. Required for association of the 30S and 50S subunits to form the 70S ribosome, for tRNA binding and peptide bond formation. It has been suggested to have peptidyltransferase activity; this is somewhat controversial. Makes several contacts with the 16S rRNA in the 70S ribosome. The chain is Large ribosomal subunit protein uL2 from Synechococcus sp. (strain CC9311).